Consider the following 123-residue polypeptide: Large ribosomal subunit protein bL21 (123 aa).

It belongs to the bacterial ribosomal protein bL21 family. In terms of assembly, part of the 50S ribosomal subunit. Contacts protein L20.

Its function is as follows. This protein binds to 23S rRNA in the presence of protein L20. This chain is Large ribosomal subunit protein bL21, found in Sinorhizobium fredii (strain NBRC 101917 / NGR234).